Here is a 289-residue protein sequence, read N- to C-terminus: MDVFAFFNLNELAFGLSKLPMFPYFDMAHYIISVMSLREQPGALCVSQRSPLACWFSSMLYCFGGAVLSALMLADAPVAPLSNTTNLLLATLMWYLVFYCPLDVVYSLASLLPLRLVLTAMKEVTRTWKVLSGVSQAGSKYSDALFVMVAVGWAKGAGGGLISNFEQLVRGVWKPETNELLKMSYPTKVTLLGAVVFSLQQCRYLPIQTHHLTFIYTLFTVTNKTRMMLLGSSSHPLSSLESFLYKTLFVRPLTDLSAEHTHSKHNGSVPEPTTAQTHTKEAEASKKTN.

Residues 1–18 (MDVFAFFNLNELAFGLSK) lie on the Lumenal side of the membrane. Residues 19-36 (LPMFPYFDMAHYIISVMS) traverse the membrane as a helical segment. Residues 37-49 (LREQPGALCVSQR) are Cytoplasmic-facing. The chain crosses the membrane as a helical span at residues 50-73 (SPLACWFSSMLYCFGGAVLSALML). The Lumenal portion of the chain corresponds to 74–85 (ADAPVAPLSNTT). The helical transmembrane segment at 86 to 103 (NLLLATLMWYLVFYCPLD) threads the bilayer. Residues 104–107 (VVYS) are Cytoplasmic-facing. Residues 108–125 (LASLLPLRLVLTAMKEVT) form a helical membrane-spanning segment. Positions 122 and 126 each coordinate a 1,2-diacyl-sn-glycero-3-phospho-(1D-myo-inositol-4,5-bisphosphate). At 126 to 144 (RTWKVLSGVSQAGSKYSDA) the chain is on the lumenal side. The helical transmembrane segment at 145–162 (LFVMVAVGWAKGAGGGLI) threads the bilayer. Topologically, residues 163–183 (SNFEQLVRGVWKPETNELLKM) are cytoplasmic. Residues 184-201 (SYPTKVTLLGAVVFSLQQ) form a helical membrane-spanning segment. Residues 202 to 210 (CRYLPIQTH) are Lumenal-facing. The chain crosses the membrane as a helical span at residues 211 to 230 (HLTFIYTLFTVTNKTRMMLL). At 231–289 (GSSSHPLSSLESFLYKTLFVRPLTDLSAEHTHSKHNGSVPEPTTAQTHTKEAEASKKTN) the chain is on the cytoplasmic side. The tract at residues 260–289 (HTHSKHNGSVPEPTTAQTHTKEAEASKKTN) is disordered. Basic and acidic residues predominate over residues 278–289 (HTKEAEASKKTN).

This sequence belongs to the TMEM38 family. Homotrimer; conformation seems to be controled by binding to diacylglycerol (DAG).

It localises to the endoplasmic reticulum membrane. It catalyses the reaction K(+)(in) = K(+)(out). With respect to regulation, channel activity is activated by increased cytosolic Ca(2+) levels and blocked by luminal high Ca(2+) levels. In terms of biological role, intracellular monovalent cation channel required for maintenance of rapid intracellular calcium release. Acts as a potassium counter-ion channel that functions in synchronization with calcium release from intracellular stores. Activated by increased cytosolic Ca(2+) levels. In Danio rerio (Zebrafish), this protein is Trimeric intracellular cation channel type B (tmem38b).